A 103-amino-acid polypeptide reads, in one-letter code: Small ribosomal subunit protein uS10 (103 aa).

Belongs to the universal ribosomal protein uS10 family. In terms of assembly, part of the 30S ribosomal subunit.

Its function is as follows. Involved in the binding of tRNA to the ribosomes. The polypeptide is Small ribosomal subunit protein uS10 (Haemophilus ducreyi (strain 35000HP / ATCC 700724)).